We begin with the raw amino-acid sequence, 140 residues long: Hemoglobin subunit alpha-D (140 aa).

Positions 1 to 140 (MLTDSDKKLV…VCTVLAEKYR (140 aa)) constitute a Globin domain. H57 and H86 together coordinate heme b.

Belongs to the globin family. In terms of assembly, heterotetramer of two alpha-D chains and two beta chains. As to expression, red blood cells.

Its function is as follows. Involved in oxygen transport from the lung to the various peripheral tissues. This Columba livia (Rock dove) protein is Hemoglobin subunit alpha-D (HBAD).